We begin with the raw amino-acid sequence, 246 residues long: 14-3-3 protein beta/alpha (246 aa).

Met1 carries the N-acetylmethionine modification. Residue Thr2 is modified to N-acetylthreonine; in 14-3-3 protein beta/alpha, N-terminally processed. Residue Thr2 is modified to Phosphothreonine. Lys5 carries the N6-acetyllysine modification. Lys51 carries the post-translational modification N6-acetyllysine; alternate. Residue Lys51 forms a Glycyl lysine isopeptide (Lys-Gly) (interchain with G-Cter in SUMO2); alternate linkage. A Phosphoserine modification is found at Ser60. Lys70 carries the post-translational modification N6-acetyllysine. 3'-nitrotyrosine is present on residues Tyr84 and Tyr106. Lys117 carries the N6-acetyllysine modification. A phosphoserine mark is found at Ser186 and Ser232.

Belongs to the 14-3-3 family. Homodimer. Interacts with SAMSN1 and PRKCE. Interacts with AKAP13. Interacts with SSH1 and TORC2/CRTC2. Interacts with ABL1; the interaction results in cytoplasmic location of ABL1 and inhibition of cABL-mediated apoptosis. Interacts with ROR2 (dimer); the interaction results in phosphorylation of YWHAB on tyrosine residues. Interacts with GAB2. Interacts with YAP1 (phosphorylated form). Interacts with the phosphorylated (by AKT1) form of SRPK2. Interacts with PKA-phosphorylated AANAT. Interacts with MYO1C. Interacts with SIRT2. Interacts with the 'Thr-369' phosphorylated form of DAPK2. Interacts with PI4KB, TBC1D22A and TBC1D22B. Interacts with the 'Ser-1134' and 'Ser-1161' phosphorylated form of SOS1. Interacts (via phosphorylated form) with YWHAB; this interaction occurs in a protein kinase AKT1-dependent manner. Interacts with SLITRK1. Interacts with SYNPO2 (phosphorylated form); YWHAB competes with ACTN2 for interaction with SYNPO2. Interacts with RIPOR2 (via phosphorylated form); this interaction occurs in a chemokine-dependent manner and does not compete for binding of RIPOR2 with RHOA nor blocks inhibition of RIPOR2-mediated RHOA activity. Interacts with MARK2 and MARK3. Interacts with TESK1; the interaction is dependent on the phosphorylation of TESK1 'Ser-439' and inhibits TESK1 kinase activity. Interacts with MEFV. Interacts with HDAC4. Interacts with ADAM22 (via C-terminus). In terms of processing, isoform alpha differs from isoform beta in being phosphorylated. Phosphorylated on Ser-60 by protein kinase C delta type catalytic subunit in a sphingosine-dependent fashion. Isoform Short contains a N-acetylmethionine at position 1.

The protein resides in the cytoplasm. It localises to the melanosome. Adapter protein implicated in the regulation of a large spectrum of both general and specialized signaling pathways. Binds to a large number of partners, usually by recognition of a phosphoserine or phosphothreonine motif. Binding generally results in the modulation of the activity of the binding partner. Negative regulator of osteogenesis. Blocks the nuclear translocation of the phosphorylated form (by AKT1) of SRPK2 and antagonizes its stimulatory effect on cyclin D1 expression resulting in blockage of neuronal apoptosis elicited by SRPK2. Negative regulator of signaling cascades that mediate activation of MAP kinases via AKAP13. This is 14-3-3 protein beta/alpha (Ywhab) from Mus musculus (Mouse).